The chain runs to 43 residues: Protein PsbN (43 aa).

A helical transmembrane segment spans residues 5–27 (TLVAIPISCLLVSFTGYALYTAF).

It belongs to the PsbN family.

It localises to the plastid. The protein resides in the chloroplast thylakoid membrane. In terms of biological role, may play a role in photosystem I and II biogenesis. This Sphagnum cuspidatum (Bog moss) protein is Protein PsbN.